We begin with the raw amino-acid sequence, 590 residues long: DNA primase (590 aa).

The CHC2-type zinc finger occupies C37–C61. The region spanning G255–P337 is the Toprim domain. Positions 261, 305, and 307 each coordinate Mg(2+).

The protein belongs to the DnaG primase family. In terms of assembly, monomer. Interacts with DnaB. Zn(2+) serves as cofactor. Requires Mg(2+) as cofactor.

It carries out the reaction ssDNA + n NTP = ssDNA/pppN(pN)n-1 hybrid + (n-1) diphosphate.. Its function is as follows. RNA polymerase that catalyzes the synthesis of short RNA molecules used as primers for DNA polymerase during DNA replication. The chain is DNA primase from Neisseria meningitidis serogroup B (strain ATCC BAA-335 / MC58).